The following is a 142-amino-acid chain: Prefoldin subunit alpha (142 aa).

The protein belongs to the prefoldin subunit alpha family. As to quaternary structure, heterohexamer of two alpha and four beta subunits.

The protein resides in the cytoplasm. Its function is as follows. Molecular chaperone capable of stabilizing a range of proteins. Seems to fulfill an ATP-independent, HSP70-like function in archaeal de novo protein folding. This chain is Prefoldin subunit alpha, found in Methanosarcina mazei (strain ATCC BAA-159 / DSM 3647 / Goe1 / Go1 / JCM 11833 / OCM 88) (Methanosarcina frisia).